Reading from the N-terminus, the 497-residue chain is Glycerol kinase (497 aa).

Threonine 21 contacts ADP. Residues threonine 21 and threonine 22 each coordinate ATP. Threonine 21 contributes to the sn-glycerol 3-phosphate binding site. ADP is bound at residue arginine 25. Sn-glycerol 3-phosphate is bound by residues arginine 88, glutamate 89, tyrosine 140, and aspartate 244. The glycerol site is built by arginine 88, glutamate 89, tyrosine 140, aspartate 244, and glutamine 245. ADP is bound by residues threonine 266 and glycine 309. ATP-binding residues include threonine 266, glycine 309, glutamine 313, and glycine 410. The ADP site is built by glycine 410 and asparagine 414.

It belongs to the FGGY kinase family.

The enzyme catalyses glycerol + ATP = sn-glycerol 3-phosphate + ADP + H(+). It functions in the pathway polyol metabolism; glycerol degradation via glycerol kinase pathway; sn-glycerol 3-phosphate from glycerol: step 1/1. Its activity is regulated as follows. Inhibited by fructose 1,6-bisphosphate (FBP). In terms of biological role, key enzyme in the regulation of glycerol uptake and metabolism. Catalyzes the phosphorylation of glycerol to yield sn-glycerol 3-phosphate. The polypeptide is Glycerol kinase (Gloeobacter violaceus (strain ATCC 29082 / PCC 7421)).